A 144-amino-acid chain; its full sequence is Large ribosomal subunit protein uL11 (144 aa).

This sequence belongs to the universal ribosomal protein uL11 family. Part of the ribosomal stalk of the 50S ribosomal subunit. Interacts with L10 and the large rRNA to form the base of the stalk. L10 forms an elongated spine to which L12 dimers bind in a sequential fashion forming a multimeric L10(L12)X complex. In terms of processing, one or more lysine residues are methylated.

Its function is as follows. Forms part of the ribosomal stalk which helps the ribosome interact with GTP-bound translation factors. This chain is Large ribosomal subunit protein uL11, found in Streptomyces avermitilis (strain ATCC 31267 / DSM 46492 / JCM 5070 / NBRC 14893 / NCIMB 12804 / NRRL 8165 / MA-4680).